A 218-amino-acid chain; its full sequence is Ras-related protein Rab11E (218 aa).

Residue 20-27 coordinates GTP; sequence GDSGVGKS. Residues 42–50 carry the Effector region motif; the sequence is SKSTIGVEF. GTP is bound by residues 68–72 and 126–129; these read DTAGQ and NKSD. Residues Cys-215 and Cys-216 are each lipidated (S-geranylgeranyl cysteine).

The protein belongs to the small GTPase superfamily. Rab family.

Its subcellular location is the cell membrane. This chain is Ras-related protein Rab11E (RAB11E), found in Lotus japonicus (Lotus corniculatus var. japonicus).